A 149-amino-acid chain; its full sequence is Large ribosomal subunit protein bL9 (149 aa).

Belongs to the bacterial ribosomal protein bL9 family.

Functionally, binds to the 23S rRNA. In Thermotoga petrophila (strain ATCC BAA-488 / DSM 13995 / JCM 10881 / RKU-1), this protein is Large ribosomal subunit protein bL9.